Reading from the N-terminus, the 602-residue chain is Protein NRT1/ PTR FAMILY 5.7 (602 aa).

2 helical membrane passes run 56–73 and 87–107; these read LSYF…TTIL and WSGV…AYLG. T111 carries the phosphothreonine modification. A run of 10 helical transmembrane segments spans residues 112–132, 152–172, 197–217, 220–240, 337–357, 381–401, 422–442, 465–485, 500–520, and 548–568; these read VLLA…SWFI, IAFF…KPSL, WWNA…VYIE, IGWG…FFIF, VKLL…GVCA, IVPP…TVTI, ILQR…IAAL, IWLA…LVGL, LGIA…NLLI, and FYWM…IVAM.

It belongs to the major facilitator superfamily. Proton-dependent oligopeptide transporter (POT/PTR) (TC 2.A.17) family. As to expression, expressed in shoots, stems, leaves and flowers.

The protein localises to the membrane. The chain is Protein NRT1/ PTR FAMILY 5.7 (NPF5.7) from Arabidopsis thaliana (Mouse-ear cress).